A 76-amino-acid chain; its full sequence is Sec-independent protein translocase protein TatA (76 aa).

A helical membrane pass occupies residues Met1–Gly21. Composition is skewed to basic and acidic residues over residues Asp41–Gly50 and Lys57–Gln76. The tract at residues Asp41–Gln76 is disordered.

Belongs to the TatA/E family. The Tat system comprises two distinct complexes: a TatABC complex, containing multiple copies of TatA, TatB and TatC subunits, and a separate TatA complex, containing only TatA subunits. Substrates initially bind to the TatABC complex, which probably triggers association of the separate TatA complex to form the active translocon.

It is found in the cell inner membrane. Part of the twin-arginine translocation (Tat) system that transports large folded proteins containing a characteristic twin-arginine motif in their signal peptide across membranes. TatA could form the protein-conducting channel of the Tat system. This chain is Sec-independent protein translocase protein TatA, found in Cupriavidus taiwanensis (strain DSM 17343 / BCRC 17206 / CCUG 44338 / CIP 107171 / LMG 19424 / R1) (Ralstonia taiwanensis (strain LMG 19424)).